A 143-amino-acid chain; its full sequence is MSIIKEFKEFAVKGNVMDLAVGVIIGGAFSKIVDSVVKDLIMPVIGVLTGGLDFSNKFILLGTIPPSFKGNPDSFKDLQAAGVAAFGYGSFITVAINFVILAFIIFLMVKFINKLRKPAEAAPAATPEDVLLLREIRDSLKQR.

Helical transmembrane passes span 10–30 (FAVK…GAFS) and 89–109 (GSFI…FLMV).

It belongs to the MscL family. In terms of assembly, homopentamer.

It localises to the cell inner membrane. Functionally, channel that opens in response to stretch forces in the membrane lipid bilayer. May participate in the regulation of osmotic pressure changes within the cell. The protein is Large-conductance mechanosensitive channel of Burkholderia vietnamiensis (strain G4 / LMG 22486) (Burkholderia cepacia (strain R1808)).